A 780-amino-acid chain; its full sequence is Alpha-xylosidase (780 aa).

N-linked (GlcNAc...) asparagine glycans are attached at residues Asn-48, Asn-84, Asn-247, and Asn-298. Active-site residues include Asp-434 and Glu-437. The N-linked (GlcNAc...) asparagine glycan is linked to Asn-443. Catalysis depends on Asp-501, which acts as the Proton donor. An N-linked (GlcNAc...) asparagine glycan is attached at Asn-718.

Belongs to the glycosyl hydrolase 31 family.

The protein localises to the secreted. The catalysed reaction is Hydrolysis of terminal, non-reducing alpha-D-xylose residues with release of alpha-D-xylose.. Functionally, catalyzes the liberation of alpha-xylose from the non-reducing terminal glucose of xyloglucan oligosaccharides. The chain is Alpha-xylosidase from Emericella nidulans (strain FGSC A4 / ATCC 38163 / CBS 112.46 / NRRL 194 / M139) (Aspergillus nidulans).